The sequence spans 126 residues: Aspartate 1-decarboxylase (126 aa).

Serine 25 serves as the catalytic Schiff-base intermediate with substrate; via pyruvic acid. Serine 25 carries the post-translational modification Pyruvic acid (Ser). Threonine 57 is a binding site for substrate. Tyrosine 58 functions as the Proton donor in the catalytic mechanism. 73-75 (GAA) serves as a coordination point for substrate.

This sequence belongs to the PanD family. As to quaternary structure, heterooctamer of four alpha and four beta subunits. Pyruvate is required as a cofactor. Post-translationally, is synthesized initially as an inactive proenzyme, which is activated by self-cleavage at a specific serine bond to produce a beta-subunit with a hydroxyl group at its C-terminus and an alpha-subunit with a pyruvoyl group at its N-terminus.

It localises to the cytoplasm. The catalysed reaction is L-aspartate + H(+) = beta-alanine + CO2. It participates in cofactor biosynthesis; (R)-pantothenate biosynthesis; beta-alanine from L-aspartate: step 1/1. Functionally, catalyzes the pyruvoyl-dependent decarboxylation of aspartate to produce beta-alanine. In Serratia proteamaculans (strain 568), this protein is Aspartate 1-decarboxylase.